The primary structure comprises 123 residues: MKKKGFQRSDRVAEQVRRDLADLIRTELKDPRVGMISLTAVELTPDYAHAKVFFATLNSEHLEEVERGLKRAAGFLRRELGKRIHIHTLPELHFVYDSSIERGASLSLLIDQANALSDQTPEE.

This sequence belongs to the RbfA family. As to quaternary structure, monomer. Binds 30S ribosomal subunits, but not 50S ribosomal subunits or 70S ribosomes.

It is found in the cytoplasm. Its function is as follows. One of several proteins that assist in the late maturation steps of the functional core of the 30S ribosomal subunit. Associates with free 30S ribosomal subunits (but not with 30S subunits that are part of 70S ribosomes or polysomes). Required for efficient processing of 16S rRNA. May interact with the 5'-terminal helix region of 16S rRNA. This Dechloromonas aromatica (strain RCB) protein is Ribosome-binding factor A.